The primary structure comprises 304 residues: E3 ubiquitin-protein ligase BOI (304 aa).

Residues 178-214 are WRD domain; that stretch reads LQERVKSLYVENQIWRDIAQTNEANANTLRTNLDQVL. A coiled-coil region spans residues 197–220; sequence QTNEANANTLRTNLDQVLAQLETF. The RING-type zinc finger occupies 254–291; that stretch reads CKRCGEREASVLVLPCRHLCLCTVCGGSALLRTCPVCD.

As to quaternary structure, interacts with MYB108/BOS1 and the DELLA proteins GAI, RGA, RGL1, RGL2 and RGL3. Expressed in leaves, siliques, roots, flowering tissues and stigma tips.

Its subcellular location is the nucleus. The enzyme catalyses S-ubiquitinyl-[E2 ubiquitin-conjugating enzyme]-L-cysteine + [acceptor protein]-L-lysine = [E2 ubiquitin-conjugating enzyme]-L-cysteine + N(6)-ubiquitinyl-[acceptor protein]-L-lysine.. The protein operates within protein degradation; proteasomal ubiquitin-dependent pathway. E3 ubiquitin-protein ligase involved in the regulation of pathogen and abiotic stress responses by facilitating degradation of MYB108/BOI. Attenuates cell death by preventing caspase activation. Has no effect on the stability of the DELLA proteins. Not regulated by MYB108/BOI. The polypeptide is E3 ubiquitin-protein ligase BOI (BOI) (Arabidopsis thaliana (Mouse-ear cress)).